A 1888-amino-acid polypeptide reads, in one-letter code: Tensin-1 (1888 aa).

Residues 21–31 (PQPPGTPPGPA) are compositionally biased toward pro residues. The segment at 21 to 45 (PQPPGTPPGPARPERCEPGGAAPDP) is disordered. The Phorbol-ester/DAG-type zinc-finger motif lies at 61–108 (THHFKVKAFKKVKPCGICRQAITREGCVCKVCSFSCHRKCQAKVAAPC). Positions 132 to 174 (GEGDCRVGSSPKNLEEGGSMRVSPSIQPQPQSQPTSLSRNTSV) are disordered. Positions 154–167 (SPSIQPQPQSQPTS) are enriched in low complexity. Residues 175 to 347 (SRAMEDSCEL…HYFSGLLSGS (173 aa)) enclose the Phosphatase tensin-type domain. The C2 tensin-type domain occupies 352–478 (NKPLFLHHVI…GKVEFVFSYG (127 aa)). Residues S509 and S535 each carry the phosphoserine modification. Y537 carries the post-translational modification Phosphotyrosine. Disordered regions lie at residues 543 to 608 (KDSL…PQEK), 696 to 722 (VTNTSESGYPETLSPLTNGLDKPYSTE), and 789 to 854 (RSQS…SAET). Residue S549 is modified to Phosphoserine. The segment covering 571–584 (LSVSSDSGNSTAST) has biased composition (polar residues). The residue at position 604 (S604) is a Phosphoserine. Phosphoserine is present on S792. The span at 835-852 (RSPLQSLARSKPSPQLSA) shows a compositional bias: polar residues. S867 bears the Phosphoserine mark. Disordered stretches follow at residues 893–1077 (PLHK…RSPV) and 1109–1555 (EEME…AGSL). Residues 905–922 (PGASPLSSQPLLGSSRQS) are compositionally biased toward low complexity. S930, S935, and S952 each carry phosphoserine. Residues 962-986 (GSNQSFHPKSPASSTFLPSPHSSAG) are compositionally biased toward polar residues. T1015 carries the post-translational modification Phosphothreonine. The residue at position 1054 (S1054) is a Phosphoserine. Residues 1057 to 1069 (QYENQSPEATSPR) are compositionally biased toward polar residues. Y1058 carries the phosphotyrosine modification. Phosphoserine occurs at positions 1062, 1118, and 1122. The segment covering 1169 to 1179 (EVTKPPEEPRS) has biased composition (basic and acidic residues). Low complexity predominate over residues 1227–1239 (SPSPLSTSSPILS). Residues 1240–1257 (ADSTSVGSFPSVVSSDQG) are compositionally biased toward polar residues. S1279 carries the phosphoserine modification. The segment covering 1284–1300 (SYQSSSPVPVGGSSYNS) has biased composition (low complexity). Over residues 1301-1322 (PDYSLQPFSSSPESQGQPQYSA) the composition is skewed to polar residues. A glycan (O-linked (GalNAc...) serine) is linked at S1321. A Phosphoserine modification is found at S1331. T1343 carries the phosphothreonine modification. S1346 bears the Phosphoserine mark. T1420 is subject to Phosphothreonine. S1423 is modified (phosphoserine). Over residues 1436–1446 (NLASSLHSNAV) the composition is skewed to polar residues. Phosphoserine is present on residues S1448, S1463, and S1468. A compositionally biased stretch (polar residues) spans 1490–1507 (LSRQSSASGYQAPSTPSF). Over residues 1518–1530 (SSPATSPSPDSAA) the composition is skewed to low complexity. 4 positions are modified to phosphoserine: S1535, S1547, S1554, and S1599. The region spanning 1616-1725 (WYKPEISREQ…ALPCKLVIPS (110 aa)) is the SH2 domain. Residue S1741 is modified to Phosphoserine. In terms of domain architecture, PTB spans 1751–1885 (ACNVLFVNSV…FVSKVMLSAG (135 aa)).

Belongs to the PTEN phosphatase protein family. In terms of assembly, binds to actin filaments and interacts with phosphotyrosine-containing proteins. Interacts with STARD8. Interacts with protein phosphatase PPP1CA. Interacts (via N-terminus) with Rho GTPase-activating protein DLC1; the interaction is decreased by phosphorylation of TNS1. Interacts with tyrosine-phosphorylated proteins BCAR1/p130Cas and PTK2/FAK; the interactions are increased by phosphorylation of TNS1. Extensively phosphorylated on serine and threonine residues in a p38 MAPK-dependent manner which reduces interaction with DLC1 and increases interaction with tyrosine-phosphorylated proteins including BCAR1/p130cas and PTK2/FAK. The majority of the phosphorylated Ser/Thr residues are immediately adjacent to a proline residue. Also phosphorylated on tyrosine residues. In terms of processing, rapidly cleaved by calpain II.

The protein resides in the cell surface. Its subcellular location is the cell junction. It is found in the focal adhesion. The protein localises to the cytoplasm. It localises to the cytoskeleton. In terms of biological role, may act as a protein phosphatase and/or a lipid phosphatase. Involved in fibrillar adhesion formation. Essential for myofibroblast differentiation and myofibroblast-mediated extracellular matrix deposition. Enhances RHOA activation in the presence of DLC1. Plays a role in cell polarization and migration. May be involved in cartilage development and in linking signal transduction pathways to the cytoskeleton. This Mus musculus (Mouse) protein is Tensin-1.